The following is a 144-amino-acid chain: MDVEKLWNHTKKDSIFQTTHFSSSSKPFFTRSFSTKTSSSPSSKSHFTRSFSTKPSSSSSSSDLIFRRSFSAKPKTSKSLLLSRSCSTKSSADLSSKSSSLSRILSKKGASVTGKCFKVAKEHKSRFYIIKRCVLMLVCWHKHS.

N-linked (GlcNAc...) asparagine glycosylation is present at asparagine 8. Residues 22 to 63 (SSSSKPFFTRSFSTKTSSSPSSKSHFTRSFSTKPSSSSSSSD) form a disordered region. The helical transmembrane segment at 104-120 (ILSKKGASVTGKCFKVA) threads the bilayer. The tract at residues 111-142 (SVTGKCFKVAKEHKSRFYIIKRCVLMLVCWHK) is required for DVL/RTFL small polypeptide activity.

It belongs to the DVL/RTFL small polypeptides family.

The protein localises to the cell membrane. Small polypeptide acting as a regulatory molecule which coordinates cellular responses required for differentiation, growth and development, probably by restricting polar cell proliferation in lateral organs and coordinating socket cell recruitment and differentiation at trichome sites. The protein is Small polypeptide DEVIL 15 of Arabidopsis thaliana (Mouse-ear cress).